The following is a 152-amino-acid chain: Transcriptional regulator MraZ (152 aa).

SpoVT-AbrB domains lie at 5–52 (ATLV…PLPE) and 81–124 (ASEC…DETT).

Belongs to the MraZ family. As to quaternary structure, forms oligomers.

The protein localises to the cytoplasm. The protein resides in the nucleoid. Its function is as follows. Negatively regulates its own expression and that of the subsequent genes in the proximal part of the division and cell wall (dcw) gene cluster. Acts by binding directly to DNA. May also regulate the expression of genes outside the dcw cluster. The chain is Transcriptional regulator MraZ from Klebsiella pneumoniae subsp. pneumoniae (strain ATCC 700721 / MGH 78578).